The primary structure comprises 205 residues: Glycerol-3-phosphate acyltransferase (205 aa).

5 helical membrane-spanning segments follow: residues 4–24 (IAPG…AILV), 80–100 (PFWL…PVFF), 107–127 (GVAT…GVMA), 130–150 (WLLT…SALI), and 155–175 (VWWF…LILL).

Belongs to the PlsY family. As to quaternary structure, probably interacts with PlsX.

It localises to the cell inner membrane. The catalysed reaction is an acyl phosphate + sn-glycerol 3-phosphate = a 1-acyl-sn-glycero-3-phosphate + phosphate. It functions in the pathway lipid metabolism; phospholipid metabolism. In terms of biological role, catalyzes the transfer of an acyl group from acyl-phosphate (acyl-PO(4)) to glycerol-3-phosphate (G3P) to form lysophosphatidic acid (LPA). This enzyme utilizes acyl-phosphate as fatty acyl donor, but not acyl-CoA or acyl-ACP. The protein is Glycerol-3-phosphate acyltransferase of Klebsiella pneumoniae (strain 342).